The following is a 52-amino-acid chain: Large ribosomal subunit protein bL32c (52 aa).

This sequence belongs to the bacterial ribosomal protein bL32 family.

The protein resides in the plastid. Its subcellular location is the chloroplast. This Aethionema grandiflorum (Persian stone-cress) protein is Large ribosomal subunit protein bL32c.